We begin with the raw amino-acid sequence, 332 residues long: Mitoferrin-1 (332 aa).

Solcar repeat units follow at residues A31–S119, N129–H213, and Y220–F314. 6 consecutive transmembrane segments (helical) span residues L33–Y52, G94–Y113, H131–N150, S188–Y207, P222–T241, and G289–Y308.

This sequence belongs to the mitochondrial carrier (TC 2.A.29) family. Highly expressed in hematopoietic organs, Expressed in the intermediate cell mass (ICM), a tissue equivalent to the mammalian extraembryonic yolk-sac blood islands. Colocalizes with gata1.

The protein resides in the mitochondrion inner membrane. The catalysed reaction is Fe(2+)(in) = Fe(2+)(out). Its function is as follows. Mitochondrial iron transporter that specifically mediates iron uptake in developing erythroid cells, thereby playing an essential role in heme biosynthesis. In Danio rerio (Zebrafish), this protein is Mitoferrin-1 (slc25a37).